The following is a 116-amino-acid chain: U16-barytoxin-Tl1f (116 aa).

The signal sequence occupies residues 1-20 (MKTIIVFLSLLVLATKFGDA). Positions 21-74 (NEGVNQEQMKEVIQNEFREDFLNEMAAMSLLQQLEAIESTLLEKEADRNSRQKR) are excised as a propeptide. 3 cysteine pairs are disulfide-bonded: Cys-75/Cys-90, Cys-82/Cys-95, and Cys-89/Cys-110. N-linked (GlcNAc...) asparagine glycosylation occurs at Asn-85.

Belongs to the neurotoxin 14 (magi-1) family. 06 (ICK-Trit) subfamily. Expressed by the venom gland.

It is found in the secreted. Ion channel inhibitor. The chain is U16-barytoxin-Tl1f from Trittame loki (Brush-footed trapdoor spider).